Consider the following 75-residue polypeptide: Translational regulator CsrA (75 aa).

It belongs to the CsrA/RsmA family. As to quaternary structure, homodimer; the beta-strands of each monomer intercalate to form a hydrophobic core, while the alpha-helices form wings that extend away from the core.

The protein resides in the cytoplasm. Functionally, a translational regulator that binds mRNA to regulate translation initiation and/or mRNA stability. Usually binds in the 5'-UTR at or near the Shine-Dalgarno sequence preventing ribosome-binding, thus repressing translation. Its main target seems to be the major flagellin gene, while its function is anatagonized by FliW. The chain is Translational regulator CsrA from Acetivibrio thermocellus (strain ATCC 27405 / DSM 1237 / JCM 9322 / NBRC 103400 / NCIMB 10682 / NRRL B-4536 / VPI 7372) (Clostridium thermocellum).